Consider the following 197-residue polypeptide: Nucleoside triphosphate pyrophosphatase (197 aa).

The active-site Proton acceptor is the Asp-71.

This sequence belongs to the Maf family. The cofactor is a divalent metal cation.

It localises to the cytoplasm. The enzyme catalyses a ribonucleoside 5'-triphosphate + H2O = a ribonucleoside 5'-phosphate + diphosphate + H(+). The catalysed reaction is a 2'-deoxyribonucleoside 5'-triphosphate + H2O = a 2'-deoxyribonucleoside 5'-phosphate + diphosphate + H(+). Nucleoside triphosphate pyrophosphatase. May have a dual role in cell division arrest and in preventing the incorporation of modified nucleotides into cellular nucleic acids. In Nostoc punctiforme (strain ATCC 29133 / PCC 73102), this protein is Nucleoside triphosphate pyrophosphatase.